Here is a 245-residue protein sequence, read N- to C-terminus: DNA repair protein RecO (245 aa).

Belongs to the RecO family.

Its function is as follows. Involved in DNA repair and RecF pathway recombination. This Porphyromonas gingivalis (strain ATCC BAA-308 / W83) protein is DNA repair protein RecO.